A 123-amino-acid polypeptide reads, in one-letter code: Large ribosomal subunit protein bL12 (123 aa).

This sequence belongs to the bacterial ribosomal protein bL12 family. As to quaternary structure, homodimer. Part of the ribosomal stalk of the 50S ribosomal subunit. Forms a multimeric L10(L12)X complex, where L10 forms an elongated spine to which 2 to 4 L12 dimers bind in a sequential fashion. Binds GTP-bound translation factors.

In terms of biological role, forms part of the ribosomal stalk which helps the ribosome interact with GTP-bound translation factors. Is thus essential for accurate translation. The sequence is that of Large ribosomal subunit protein bL12 from Hydrogenovibrio crunogenus (strain DSM 25203 / XCL-2) (Thiomicrospira crunogena).